We begin with the raw amino-acid sequence, 977 residues long: Bifunctional glutamine synthetase adenylyltransferase/adenylyl-removing enzyme (977 aa).

Residues 1-457 are adenylyl removase; sequence MRLPLPSDLP…HFRQVIADPD (457 aa). The adenylyl transferase stretch occupies residues 468–977; the sequence is GGEWSPLWEQ…RRIWGELGLS (510 aa).

It belongs to the GlnE family. Mg(2+) is required as a cofactor.

The catalysed reaction is [glutamine synthetase]-O(4)-(5'-adenylyl)-L-tyrosine + phosphate = [glutamine synthetase]-L-tyrosine + ADP. It carries out the reaction [glutamine synthetase]-L-tyrosine + ATP = [glutamine synthetase]-O(4)-(5'-adenylyl)-L-tyrosine + diphosphate. Functionally, involved in the regulation of glutamine synthetase GlnA, a key enzyme in the process to assimilate ammonia. When cellular nitrogen levels are high, the C-terminal adenylyl transferase (AT) inactivates GlnA by covalent transfer of an adenylyl group from ATP to specific tyrosine residue of GlnA, thus reducing its activity. Conversely, when nitrogen levels are low, the N-terminal adenylyl removase (AR) activates GlnA by removing the adenylyl group by phosphorolysis, increasing its activity. The regulatory region of GlnE binds the signal transduction protein PII (GlnB) which indicates the nitrogen status of the cell. This Pseudomonas putida (strain ATCC 47054 / DSM 6125 / CFBP 8728 / NCIMB 11950 / KT2440) protein is Bifunctional glutamine synthetase adenylyltransferase/adenylyl-removing enzyme.